A 356-amino-acid chain; its full sequence is Glucose 1-dehydrogenase 2 (356 aa).

D38 lines the Zn(2+) pocket. S40 contacts substrate. Positions 64 and 65 each coordinate Zn(2+). Positions 114 and 150 each coordinate substrate. Zn(2+) is bound at residue E150. Residues 181–184 (NGNL), 206–207 (RR), and 301–303 (VVN) contribute to the NADP(+) site. N303 serves as a coordination point for substrate.

Belongs to the zinc-containing alcohol dehydrogenase family. Glucose 1-dehydrogenase subfamily. The cofactor is Zn(2+).

It catalyses the reaction D-glucose + NAD(+) = D-glucono-1,5-lactone + NADH + H(+). The catalysed reaction is D-glucose + NADP(+) = D-glucono-1,5-lactone + NADPH + H(+). Its function is as follows. Catalyzes the NAD(P)(+)-dependent oxidation of D-glucose to D-gluconate via gluconolactone. Can utilize both NAD(+) and NADP(+) as electron acceptor. Is involved in the degradation of glucose through a modified Entner-Doudoroff pathway. The polypeptide is Glucose 1-dehydrogenase 2 (Haloterrigena turkmenica (strain ATCC 51198 / DSM 5511 / JCM 9101 / NCIMB 13204 / VKM B-1734 / 4k) (Halococcus turkmenicus)).